The sequence spans 137 residues: MATFKLEVVTPLKKVLDRDAEMVIMRTIEGDMGVMADHAPFVAELAVGEMKIKSANGEEAYFVSGGFLEISKEKTMILADEAIDVKEIDVERAKREAEIAKETLVKLKEDKDIAVTQKSLQEALTKVRIAEQYMHHL.

This sequence belongs to the ATPase epsilon chain family. As to quaternary structure, F-type ATPases have 2 components, CF(1) - the catalytic core - and CF(0) - the membrane proton channel. CF(1) has five subunits: alpha(3), beta(3), gamma(1), delta(1), epsilon(1). CF(0) has three main subunits: a, b and c.

It localises to the cell inner membrane. Its function is as follows. Produces ATP from ADP in the presence of a sodium gradient across the membrane. The sequence is that of ATP synthase epsilon chain, sodium ion specific (atpC) from Propionigenium modestum.